The sequence spans 374 residues: Protein RecA (374 aa).

66–73 (GPESSGKT) provides a ligand contact to ATP. The interval 326 to 374 (KLGVGVHPEESATEPGADAASAAPADAAPAVPAPTTAKATKSKATAAKS) is disordered. Residues 338–374 (TEPGADAASAAPADAAPAVPAPTTAKATKSKATAAKS) are compositionally biased toward low complexity.

Belongs to the RecA family.

The protein localises to the cytoplasm. In terms of biological role, can catalyze the hydrolysis of ATP in the presence of single-stranded DNA, the ATP-dependent uptake of single-stranded DNA by duplex DNA, and the ATP-dependent hybridization of homologous single-stranded DNAs. It interacts with LexA causing its activation and leading to its autocatalytic cleavage. This chain is Protein RecA, found in Streptomyces coelicolor (strain ATCC BAA-471 / A3(2) / M145).